The primary structure comprises 160 residues: SsrA-binding protein (160 aa).

Residues 1 to 23 (MARKKKQDKGQGPKTIAQNRRAR) are disordered.

Belongs to the SmpB family.

The protein resides in the cytoplasm. Required for rescue of stalled ribosomes mediated by trans-translation. Binds to transfer-messenger RNA (tmRNA), required for stable association of tmRNA with ribosomes. tmRNA and SmpB together mimic tRNA shape, replacing the anticodon stem-loop with SmpB. tmRNA is encoded by the ssrA gene; the 2 termini fold to resemble tRNA(Ala) and it encodes a 'tag peptide', a short internal open reading frame. During trans-translation Ala-aminoacylated tmRNA acts like a tRNA, entering the A-site of stalled ribosomes, displacing the stalled mRNA. The ribosome then switches to translate the ORF on the tmRNA; the nascent peptide is terminated with the 'tag peptide' encoded by the tmRNA and targeted for degradation. The ribosome is freed to recommence translation, which seems to be the essential function of trans-translation. In Thermobifida fusca (strain YX), this protein is SsrA-binding protein.